A 194-amino-acid chain; its full sequence is Imidazoleglycerol-phosphate dehydratase (194 aa).

Belongs to the imidazoleglycerol-phosphate dehydratase family.

The protein resides in the cytoplasm. It carries out the reaction D-erythro-1-(imidazol-4-yl)glycerol 3-phosphate = 3-(imidazol-4-yl)-2-oxopropyl phosphate + H2O. It functions in the pathway amino-acid biosynthesis; L-histidine biosynthesis; L-histidine from 5-phospho-alpha-D-ribose 1-diphosphate: step 6/9. This chain is Imidazoleglycerol-phosphate dehydratase, found in Bacillus cereus (strain AH187).